The sequence spans 424 residues: GTPase Obg (424 aa).

The Obg domain maps to 1–160; that stretch reads MFDRVEINIK…YDLILELKLI (160 aa). The OBG-type G domain maps to 161-328; that stretch reads ADVAIIGYPN…LLAKVAEKLD (168 aa). GTP is bound by residues 167–174, 192–196, 213–216, 280–283, and 309–311; these read GYPNVGKS, FTTLS, EVPG, NKID, and SAL. Residues Ser-174 and Thr-194 each coordinate Mg(2+). The OCT domain occupies 349 to 424; it reads PAPKGKMGFR…IITGRMEWYL (76 aa).

This sequence belongs to the TRAFAC class OBG-HflX-like GTPase superfamily. OBG GTPase family. Monomer. Mg(2+) is required as a cofactor.

It is found in the cytoplasm. Functionally, an essential GTPase which binds GTP, GDP and possibly (p)ppGpp with moderate affinity, with high nucleotide exchange rates and a fairly low GTP hydrolysis rate. Plays a role in control of the cell cycle, stress response, ribosome biogenesis and in those bacteria that undergo differentiation, in morphogenesis control. The chain is GTPase Obg from Dehalococcoides mccartyi (strain ATCC BAA-2100 / JCM 16839 / KCTC 5957 / BAV1).